The chain runs to 207 residues: Cilia- and flagella-associated protein 418 (207 aa).

Residues 1 to 75 (MAEDLDELLD…LINEILEEPN (75 aa)) form a required for interaction with FAM161A region. Positions 26-52 (MVEQPKGCGGGTHSSDRNQAKAKETLR) are disordered. Residues 39–52 (SSDRNQAKAKETLR) are compositionally biased toward basic and acidic residues.

As to quaternary structure, interacts (via N-terminus) with FAM161A (via central region); the interaction is direct. As to expression, widely expressed, with highest levels in heart and brain. Also expressed in the retina (at protein level).

It is found in the cytoplasm. Its subcellular location is the photoreceptor inner segment. May be involved in photoreceptor outer segment disk morphogenesis. This Homo sapiens (Human) protein is Cilia- and flagella-associated protein 418.